We begin with the raw amino-acid sequence, 272 residues long: METYAVFGNPIAHSKSPFIHQQFAQQLKIDHPYGRVLAPVDDFVNTLNAFFAQGGKGANVTVPFKEEAFARADELTERAALAGAVNTLKRLDDGRLLGDNTDGIGLLSDLERLSFIRPGLRILLIGAGGASRGVLLPLLSMDCAVTIANRTASRAEELAQIFAHTGSVQALRLDALEGHEFDLIINATSSGISGDIPAIPSSLIHPAVCCYDMFYQKGNTPFLAWCAEQGAKRYADGLGMLVGQAAHAVFLWHGVLPDVEPVIATLKQELLA.

Residues 14–16 (SKS) and T61 contribute to the shikimate site. Residue K65 is the Proton acceptor of the active site. E77 is a binding site for NADP(+). Shikimate contacts are provided by N86 and D102. Residues 126–130 (GAGGA), 149–154 (NRTASR), and M213 each bind NADP(+). Shikimate is bound at residue Y215. An NADP(+)-binding site is contributed by G237.

This sequence belongs to the shikimate dehydrogenase family. Homodimer.

It carries out the reaction shikimate + NADP(+) = 3-dehydroshikimate + NADPH + H(+). It participates in metabolic intermediate biosynthesis; chorismate biosynthesis; chorismate from D-erythrose 4-phosphate and phosphoenolpyruvate: step 4/7. Functionally, involved in the biosynthesis of the chorismate, which leads to the biosynthesis of aromatic amino acids. Catalyzes the reversible NADPH linked reduction of 3-dehydroshikimate (DHSA) to yield shikimate (SA). This is Shikimate dehydrogenase (NADP(+)) from Citrobacter koseri (strain ATCC BAA-895 / CDC 4225-83 / SGSC4696).